The sequence spans 304 residues: Elongation factor Ts (304 aa).

The involved in Mg(2+) ion dislocation from EF-Tu stretch occupies residues 80–83; that stretch reads TDFV.

It belongs to the EF-Ts family.

Its subcellular location is the cytoplasm. Associates with the EF-Tu.GDP complex and induces the exchange of GDP to GTP. It remains bound to the aminoacyl-tRNA.EF-Tu.GTP complex up to the GTP hydrolysis stage on the ribosome. The chain is Elongation factor Ts from Clostridium tetani (strain Massachusetts / E88).